The chain runs to 178 residues: ATP-dependent protease subunit HslV (178 aa).

The active site involves T5. Residues G161, C164, and T167 each contribute to the Na(+) site.

This sequence belongs to the peptidase T1B family. HslV subfamily. A double ring-shaped homohexamer of HslV is capped on each side by a ring-shaped HslU homohexamer. The assembly of the HslU/HslV complex is dependent on binding of ATP.

It localises to the cytoplasm. It catalyses the reaction ATP-dependent cleavage of peptide bonds with broad specificity.. Its activity is regulated as follows. Allosterically activated by HslU binding. In terms of biological role, protease subunit of a proteasome-like degradation complex believed to be a general protein degrading machinery. The protein is ATP-dependent protease subunit HslV of Aliarcobacter butzleri (strain RM4018) (Arcobacter butzleri).